Consider the following 150-residue polypeptide: Large ribosomal subunit protein uL13 (150 aa).

Positions 130-150 (EHPHGAQQPQPYQLNPSASIK) are disordered. A compositionally biased stretch (polar residues) spans 136 to 150 (QQPQPYQLNPSASIK).

The protein belongs to the universal ribosomal protein uL13 family. Part of the 50S ribosomal subunit.

Functionally, this protein is one of the early assembly proteins of the 50S ribosomal subunit, although it is not seen to bind rRNA by itself. It is important during the early stages of 50S assembly. This chain is Large ribosomal subunit protein uL13, found in Synechococcus sp. (strain RCC307).